A 601-amino-acid chain; its full sequence is Elongation factor 4 (601 aa).

In terms of domain architecture, tr-type G spans 5–187 (SNIRNFAIIA…AIVTKLPSPN (183 aa)). Residues 17–22 (DHGKST) and 134–137 (NKID) contribute to the GTP site.

Belongs to the TRAFAC class translation factor GTPase superfamily. Classic translation factor GTPase family. LepA subfamily.

It localises to the cell inner membrane. The catalysed reaction is GTP + H2O = GDP + phosphate + H(+). Functionally, required for accurate and efficient protein synthesis under certain stress conditions. May act as a fidelity factor of the translation reaction, by catalyzing a one-codon backward translocation of tRNAs on improperly translocated ribosomes. Back-translocation proceeds from a post-translocation (POST) complex to a pre-translocation (PRE) complex, thus giving elongation factor G a second chance to translocate the tRNAs correctly. Binds to ribosomes in a GTP-dependent manner. This chain is Elongation factor 4, found in Orientia tsutsugamushi (strain Ikeda) (Rickettsia tsutsugamushi).